Here is a 124-residue protein sequence, read N- to C-terminus: uncharacterized protein (124 aa).

The disordered stretch occupies residues 1 to 28; that stretch reads MGTSLRSQSFREPRPSYGRLHESQGRSL. Over residues 9 to 28 the composition is skewed to basic and acidic residues; the sequence is SFREPRPSYGRLHESQGRSL.

This is an uncharacterized protein from Mus musculus (Mouse).